We begin with the raw amino-acid sequence, 190 residues long: Elongation factor P (190 aa).

The protein belongs to the elongation factor P family.

The protein resides in the cytoplasm. It functions in the pathway protein biosynthesis; polypeptide chain elongation. Functionally, involved in peptide bond synthesis. Stimulates efficient translation and peptide-bond synthesis on native or reconstituted 70S ribosomes in vitro. Probably functions indirectly by altering the affinity of the ribosome for aminoacyl-tRNA, thus increasing their reactivity as acceptors for peptidyl transferase. The polypeptide is Elongation factor P (Pseudomonas fluorescens (strain SBW25)).